Here is a 95-residue protein sequence, read N- to C-terminus: Integration host factor subunit beta (95 aa).

This sequence belongs to the bacterial histone-like protein family. In terms of assembly, heterodimer of an alpha and a beta chain.

In terms of biological role, this protein is one of the two subunits of integration host factor, a specific DNA-binding protein that functions in genetic recombination as well as in transcriptional and translational control. Involved in hydrogenase gene expression. The chain is Integration host factor subunit beta (ihfB) from Rhodobacter capsulatus (Rhodopseudomonas capsulata).